Reading from the N-terminus, the 485-residue chain is Rhamnulokinase (485 aa).

8–12 contributes to the ATP binding site; the sequence is ASSGR. Residues glycine 78 and 231–233 contribute to the substrate site; that span reads HDT. Aspartate 232 (proton acceptor) is an active-site residue. An ATP-binding site is contributed by threonine 254. Asparagine 291 contributes to the substrate binding site. An ATP-binding site is contributed by glutamine 299. Residues cysteine 348 and cysteine 365 are joined by a disulfide bond. ATP is bound at residue glycine 397. Residues cysteine 408 and cysteine 412 are joined by a disulfide bond.

This sequence belongs to the rhamnulokinase family. It depends on Mg(2+) as a cofactor.

The catalysed reaction is L-rhamnulose + ATP = L-rhamnulose 1-phosphate + ADP + H(+). It participates in carbohydrate degradation; L-rhamnose degradation; glycerone phosphate from L-rhamnose: step 2/3. Functionally, involved in the catabolism of L-rhamnose (6-deoxy-L-mannose). Catalyzes the transfer of the gamma-phosphate group from ATP to the 1-hydroxyl group of L-rhamnulose to yield L-rhamnulose 1-phosphate. The chain is Rhamnulokinase from Yersinia pestis bv. Antiqua (strain Angola).